A 423-amino-acid chain; its full sequence is Deferrochelatase (423 aa).

Positions 1–35 (MQYEDENGVNEPSRRRLLKGIGALALAGSCPVAHA) form a signal peptide, tat-type signal. Residues 236–238 (GTA), histidine 329, 334–336 (NPR), and arginine 347 contribute to the heme b site.

Belongs to the DyP-type peroxidase family. EfeB subfamily. Homodimer. Part of a ferrous iron transporter composed of EfeU, EfeO and EfeB. It depends on heme b as a cofactor. In terms of processing, predicted to be exported by the Tat system. The position of the signal peptide cleavage has not been experimentally proven.

The protein resides in the periplasm. The catalysed reaction is heme b + 2 H(+) = protoporphyrin IX + Fe(2+). In terms of biological role, involved in the recovery of exogenous heme iron. Extracts iron from heme while preserving the protoporphyrin ring intact. The chain is Deferrochelatase (efeB) from Escherichia coli O6:K15:H31 (strain 536 / UPEC).